We begin with the raw amino-acid sequence, 131 residues long: Large ribosomal subunit protein uL18 (131 aa).

It belongs to the universal ribosomal protein uL18 family. Part of the 50S ribosomal subunit; part of the 5S rRNA/L5/L18/L25 subcomplex. Contacts the 5S and 23S rRNAs.

In terms of biological role, this is one of the proteins that bind and probably mediate the attachment of the 5S RNA into the large ribosomal subunit, where it forms part of the central protuberance. The sequence is that of Large ribosomal subunit protein uL18 from Corynebacterium kroppenstedtii (strain DSM 44385 / JCM 11950 / CIP 105744 / CCUG 35717).